The sequence spans 476 residues: Bifunctional protein HldE (476 aa).

The interval 1 to 320 (MQNPHIPSFA…RAVHQEGGSG (320 aa)) is ribokinase. 196–199 (NLSE) provides a ligand contact to ATP. The active site involves D265. Residues 345-476 (FTNGCFDIIH…KIVERIREKD (132 aa)) form a cytidylyltransferase region.

The protein in the N-terminal section; belongs to the carbohydrate kinase PfkB family. It in the C-terminal section; belongs to the cytidylyltransferase family. As to quaternary structure, homodimer.

The catalysed reaction is D-glycero-beta-D-manno-heptose 7-phosphate + ATP = D-glycero-beta-D-manno-heptose 1,7-bisphosphate + ADP + H(+). The enzyme catalyses D-glycero-beta-D-manno-heptose 1-phosphate + ATP + H(+) = ADP-D-glycero-beta-D-manno-heptose + diphosphate. The protein operates within nucleotide-sugar biosynthesis; ADP-L-glycero-beta-D-manno-heptose biosynthesis; ADP-L-glycero-beta-D-manno-heptose from D-glycero-beta-D-manno-heptose 7-phosphate: step 1/4. Its pathway is nucleotide-sugar biosynthesis; ADP-L-glycero-beta-D-manno-heptose biosynthesis; ADP-L-glycero-beta-D-manno-heptose from D-glycero-beta-D-manno-heptose 7-phosphate: step 3/4. Functionally, catalyzes the phosphorylation of D-glycero-D-manno-heptose 7-phosphate at the C-1 position to selectively form D-glycero-beta-D-manno-heptose-1,7-bisphosphate. In terms of biological role, catalyzes the ADP transfer from ATP to D-glycero-beta-D-manno-heptose 1-phosphate, yielding ADP-D-glycero-beta-D-manno-heptose. This is Bifunctional protein HldE from Alcanivorax borkumensis (strain ATCC 700651 / DSM 11573 / NCIMB 13689 / SK2).